The chain runs to 75 residues: Veswaprin-b (75 aa).

Positions 1 to 24 (MSSGGLLLLLGLLTLWAELTPISG) are cleaved as a signal peptide. Residues 23–42 (SGQDRPKKPGLRPPRPQKPP) are disordered. Positions 27 to 72 (RPKKPGLRPPRPQKPPCVRECKNDWRCPGEQKCCRYGCIYECRDPI) constitute a WAP; atypical domain. 3 cysteine pairs are disulfide-bonded: C43-C64, C47-C59, and C53-C68.

The protein belongs to the venom waprin family. As to expression, expressed by the venom gland.

The protein localises to the secreted. Damages membranes of susceptible bacteria. Has no hemolytic activity. Not toxic to mice. Does not inhibit the proteinases elastase and cathepsin G. This chain is Veswaprin-b, found in Demansia vestigiata (Lesser black whip snake).